The chain runs to 240 residues: Protein CDV3 homolog A (240 aa).

Over residues 1-15 the composition is skewed to basic and acidic residues; sequence MAEPQEKSLDDFFAK. Residues 1–204 form a disordered region; that stretch reads MAEPQEKSLD…TESRREKEME (204 aa). At A2 the chain carries N-acetylalanine. Low complexity predominate over residues 27 to 52; that stretch reads SGSAAGSRGSARPPDGAPSSSSSMSG. Positions 57 to 73 are enriched in basic and acidic residues; it reads VKKEKSGKSDNPDQLQE. Composition is skewed to polar residues over residues 127-141 and 181-192; these read DKSSGPWNKTSQAQA and SDTQFPSLQATA. Over residues 193–204 the composition is skewed to basic and acidic residues; the sequence is KHTESRREKEME.

Belongs to the CDV3 family.

Its subcellular location is the cytoplasm. In Xenopus laevis (African clawed frog), this protein is Protein CDV3 homolog A (cdv3-a).